The primary structure comprises 434 residues: Alpha-enolase (434 aa).

Ser-40 is a Mg(2+) binding site. The substrate site is built by His-158 and Glu-167. Glu-210 acts as the Proton donor in catalysis. The Mg(2+) site is built by Asp-245, Glu-293, and Asp-318. Glu-293 and Asp-318 together coordinate substrate. Lys-343 functions as the Proton acceptor in the catalytic mechanism. Residues 370-373 and Lys-394 contribute to the substrate site; that span reads SHRS.

The protein belongs to the enolase family. As to quaternary structure, homodimer. Requires Mg(2+) as cofactor.

It localises to the cytoplasm. It catalyses the reaction (2R)-2-phosphoglycerate = phosphoenolpyruvate + H2O. It functions in the pathway carbohydrate degradation; glycolysis; pyruvate from D-glyceraldehyde 3-phosphate: step 4/5. In terms of biological role, both an enzyme and a lens structural protein. The sequence is that of Alpha-enolase (ENO1) from Anas platyrhynchos (Mallard).